The primary structure comprises 151 residues: Endoribonuclease YbeY (151 aa).

Positions 108, 112, and 118 each coordinate Zn(2+).

The protein belongs to the endoribonuclease YbeY family. It depends on Zn(2+) as a cofactor.

Its subcellular location is the cytoplasm. Its function is as follows. Single strand-specific metallo-endoribonuclease involved in late-stage 70S ribosome quality control and in maturation of the 3' terminus of the 16S rRNA. This is Endoribonuclease YbeY from Porphyromonas gingivalis (strain ATCC 33277 / DSM 20709 / CIP 103683 / JCM 12257 / NCTC 11834 / 2561).